The chain runs to 86 residues: Neurotoxin homolog NL1 (86 aa).

The first 21 residues, 1-21 (MKTLLLTLVVVTMVCMDLGYT), serve as a signal peptide directing secretion. 4 cysteine pairs are disulfide-bonded: C24–C45, C38–C62, C66–C78, and C79–C84.

Belongs to the three-finger toxin family. Short-chain subfamily. Orphan group VIII (haditoxin) sub-subfamily. Homodimer; non-covalently linked. Expressed by the venom gland.

It localises to the secreted. Functionally, antagonist of muscle and neuronal nicotinic acetylcholine receptors (nAChR) with highest affinity for neuronal alpha-7/CHRNA7 nAChRs. This chain is Neurotoxin homolog NL1, found in Naja atra (Chinese cobra).